We begin with the raw amino-acid sequence, 740 residues long: Ion-translocating oxidoreductase complex subunit C (740 aa).

4Fe-4S ferredoxin-type domains follow at residues 369 to 397 (GEPQEEQSCIRCSACADACPADLLPQQLY) and 407 to 436 (KATTHNIADCIECGACAWVCPSNIPLVQYF). Positions 377, 380, 383, 387, 416, 419, 422, and 426 each coordinate [4Fe-4S] cluster. Residues 602–717 (KLEQQQANAE…PEEQVDPRKA (116 aa)) form a disordered region. Composition is skewed to low complexity over residues 605-615 (QQQANAEPEQQ) and 637-647 (QQQANAEPEQQ).

The protein belongs to the 4Fe4S bacterial-type ferredoxin family. RnfC subfamily. In terms of assembly, the complex is composed of six subunits: RsxA, RsxB, RsxC, RsxD, RsxE and RsxG. The cofactor is [4Fe-4S] cluster.

The protein localises to the cell inner membrane. In terms of biological role, part of a membrane-bound complex that couples electron transfer with translocation of ions across the membrane. Required to maintain the reduced state of SoxR. The sequence is that of Ion-translocating oxidoreductase complex subunit C from Escherichia coli (strain ATCC 8739 / DSM 1576 / NBRC 3972 / NCIMB 8545 / WDCM 00012 / Crooks).